Here is a 101-residue protein sequence, read N- to C-terminus: Stefin-C (101 aa).

An N-acetylmethionine modification is found at methionine 1. The Secondary area of contact signature appears at 49–53 (QVVAG).

Belongs to the cystatin family.

The protein resides in the cytoplasm. Functionally, strong inhibitor of papain and cathepsin L but poor inhibitor of cathepsin B. This Bos taurus (Bovine) protein is Stefin-C.